A 418-amino-acid chain; its full sequence is Serine hydroxymethyltransferase (418 aa).

(6S)-5,6,7,8-tetrahydrofolate-binding positions include L121 and 125–127 (GHL). K230 is modified (N6-(pyridoxal phosphate)lysine). (6S)-5,6,7,8-tetrahydrofolate contacts are provided by residues E246 and 355–357 (SPF).

The protein belongs to the SHMT family. Homodimer. It depends on pyridoxal 5'-phosphate as a cofactor.

It is found in the cytoplasm. The enzyme catalyses (6R)-5,10-methylene-5,6,7,8-tetrahydrofolate + glycine + H2O = (6S)-5,6,7,8-tetrahydrofolate + L-serine. The protein operates within one-carbon metabolism; tetrahydrofolate interconversion. It functions in the pathway amino-acid biosynthesis; glycine biosynthesis; glycine from L-serine: step 1/1. Catalyzes the reversible interconversion of serine and glycine with tetrahydrofolate (THF) serving as the one-carbon carrier. This reaction serves as the major source of one-carbon groups required for the biosynthesis of purines, thymidylate, methionine, and other important biomolecules. Also exhibits THF-independent aldolase activity toward beta-hydroxyamino acids, producing glycine and aldehydes, via a retro-aldol mechanism. In Streptococcus pneumoniae (strain 70585), this protein is Serine hydroxymethyltransferase.